We begin with the raw amino-acid sequence, 313 residues long: Porphobilinogen deaminase (313 aa).

At Cys-240 the chain carries S-(dipyrrolylmethanemethyl)cysteine.

The protein belongs to the HMBS family. In terms of assembly, monomer. Requires dipyrromethane as cofactor.

It catalyses the reaction 4 porphobilinogen + H2O = hydroxymethylbilane + 4 NH4(+). Its pathway is porphyrin-containing compound metabolism; protoporphyrin-IX biosynthesis; coproporphyrinogen-III from 5-aminolevulinate: step 2/4. Functionally, tetrapolymerization of the monopyrrole PBG into the hydroxymethylbilane pre-uroporphyrinogen in several discrete steps. This chain is Porphobilinogen deaminase, found in Moorella thermoacetica (strain ATCC 39073 / JCM 9320).